Here is a 474-residue protein sequence, read N- to C-terminus: Hydrogenobyrinate a,c-diamide synthase (474 aa).

Residues 269–459 (VVAVAGGQAF…LHTHWAGCPQ (191 aa)) form the GATase cobBQ-type domain. The Nucleophile role is filled by Cys352.

Belongs to the CobB/CbiA family. It depends on Mg(2+) as a cofactor.

The enzyme catalyses hydrogenobyrinate + 2 L-glutamine + 2 ATP + 2 H2O = hydrogenobyrinate a,c-diamide + 2 L-glutamate + 2 ADP + 2 phosphate + 2 H(+). The protein operates within cofactor biosynthesis; adenosylcobalamin biosynthesis; cob(II)yrinate a,c-diamide from precorrin-2 (aerobic route): step 9/10. Catalyzes the ATP-dependent amidation of the two carboxylate groups at positions a and c of hydrogenobyrinate, using either L-glutamine or ammonia as the nitrogen source. This Thermobifida fusca (strain YX) protein is Hydrogenobyrinate a,c-diamide synthase.